The chain runs to 727 residues: Transcription activator of gluconeogenesis TRV_01442 (727 aa).

A compositionally biased stretch (polar residues) spans 1-32 (MSPHQTTGQESDNMTVNGENAQASSQYIQSNE). The segment at 1–62 (MSPHQTTGQE…PSRPKRKKAK (62 aa)) is disordered. Positions 39-55 (ATEKKASAAKAAKDPSR) are enriched in basic and acidic residues. The zn(2)-C6 fungal-type DNA-binding region spans 65-93 (CYACQRGHLTCGDERPCQRCIKRGFQDAC). Composition is skewed to polar residues over residues 129-213 (NNVN…TPSA), 267-277 (PSDSGAQRGSI), and 361-379 (MMTT…GAFN). 5 disordered regions span residues 129–224 (NNVN…FNST), 264–297 (DTPP…ESPS), 353–399 (SPAS…STPQ), 533–567 (NHNV…YNSS), and 627–666 (GSNG…QRRW). 2 stretches are compositionally biased toward low complexity: residues 380 to 399 (SRQN…STPQ) and 543 to 553 (GLMTGSTSRGS). Over residues 639–661 (EATSNETNELNGSHTNGATTNGR) the composition is skewed to polar residues.

This sequence belongs to the ERT1/acuK family.

The protein resides in the nucleus. In terms of biological role, transcription factor which regulates nonfermentable carbon utilization. Activator of gluconeogenetic genes. The polypeptide is Transcription activator of gluconeogenesis TRV_01442 (Trichophyton verrucosum (strain HKI 0517)).